The following is a 207-amino-acid chain: Holliday junction branch migration complex subunit RuvA (207 aa).

Residues 1-65 form a domain I region; sequence MYDYIRGVLT…ETEHVLYGFH (65 aa). Residues 66–144 are domain II; the sequence is TRGERECFRM…DLLPLDAQIL (79 aa). The interval 145-155 is flexible linker; the sequence is ASWEPAKPSCM. The domain III stretch occupies residues 155–207; the sequence is MEEGIQALAALGYPKSSAERMIAEAMSELPDHASVAEILPIALKKNLQGLNKI.

The protein belongs to the RuvA family. As to quaternary structure, homotetramer. Forms an RuvA(8)-RuvB(12)-Holliday junction (HJ) complex. HJ DNA is sandwiched between 2 RuvA tetramers; dsDNA enters through RuvA and exits via RuvB. An RuvB hexamer assembles on each DNA strand where it exits the tetramer. Each RuvB hexamer is contacted by two RuvA subunits (via domain III) on 2 adjacent RuvB subunits; this complex drives branch migration. In the full resolvosome a probable DNA-RuvA(4)-RuvB(12)-RuvC(2) complex forms which resolves the HJ.

The protein resides in the cytoplasm. Functionally, the RuvA-RuvB-RuvC complex processes Holliday junction (HJ) DNA during genetic recombination and DNA repair, while the RuvA-RuvB complex plays an important role in the rescue of blocked DNA replication forks via replication fork reversal (RFR). RuvA specifically binds to HJ cruciform DNA, conferring on it an open structure. The RuvB hexamer acts as an ATP-dependent pump, pulling dsDNA into and through the RuvAB complex. HJ branch migration allows RuvC to scan DNA until it finds its consensus sequence, where it cleaves and resolves the cruciform DNA. In Chlamydia abortus (strain DSM 27085 / S26/3) (Chlamydophila abortus), this protein is Holliday junction branch migration complex subunit RuvA.